A 711-amino-acid polypeptide reads, in one-letter code: L-type lectin-domain containing receptor kinase VIII.2 (711 aa).

Positions 1-30 (MLKLPPRFFSVYSTLIHILASFLCSSDVRG) are cleaved as a signal peptide. Topologically, residues 31 to 315 (DFPATRFDLG…NKLCKKSPAA (285 aa)) are extracellular. The legume-lectin like stretch occupies residues 35-260 (TRFDLGTLTL…IHSVDWWSFS (226 aa)). An N-linked (GlcNAc...) asparagine glycan is attached at asparagine 57. The tract at residues 265-306 (ESSESPPPMPNSPPPSSPSSSITPSLSTVRRKTADPSSSCRN) is disordered. Pro residues predominate over residues 269-281 (SPPPMPNSPPPSS). Low complexity predominate over residues 282-291 (PSSSITPSLS). A helical transmembrane segment spans residues 316–336 (VAGVVTAGAFFLALFAGVIIW). The Cytoplasmic portion of the chain corresponds to 337–711 (VYSKKIKYTR…IFIVGKDRSV (375 aa)). The 283-residue stretch at 374-656 (FSSSRVIGNG…LVGEADVPEV (283 aa)) folds into the Protein kinase domain. ATP contacts are provided by residues 380-388 (IGNGAFGTV) and lysine 403. The Proton acceptor role is filled by aspartate 497.

This sequence in the C-terminal section; belongs to the protein kinase superfamily. Ser/Thr protein kinase family. It in the N-terminal section; belongs to the leguminous lectin family.

Its subcellular location is the cell membrane. It catalyses the reaction L-seryl-[protein] + ATP = O-phospho-L-seryl-[protein] + ADP + H(+). The catalysed reaction is L-threonyl-[protein] + ATP = O-phospho-L-threonyl-[protein] + ADP + H(+). Involved in resistance response to the pathogenic oomycetes Phytophthora infestans and Phytophthora capsici. This chain is L-type lectin-domain containing receptor kinase VIII.2, found in Arabidopsis thaliana (Mouse-ear cress).